Here is a 137-residue protein sequence, read N- to C-terminus: L-ectoine synthase (137 aa).

Residues glutamate 115–aspartate 137 are disordered.

Belongs to the ectoine synthase family.

The catalysed reaction is (2S)-4-acetamido-2-aminobutanoate = L-ectoine + H2O. It functions in the pathway amine and polyamine biosynthesis; ectoine biosynthesis; L-ectoine from L-aspartate 4-semialdehyde: step 3/3. Catalyzes the circularization of gamma-N-acetyl-alpha,gamma-diaminobutyric acid (ADABA) to ectoine (1,4,5,6-tetrahydro-2-methyl-4-pyrimidine carboxylic acid), which is an excellent osmoprotectant. In Sphingopyxis alaskensis (strain DSM 13593 / LMG 18877 / RB2256) (Sphingomonas alaskensis), this protein is L-ectoine synthase.